Consider the following 200-residue polypeptide: Imidazoleglycerol-phosphate dehydratase (200 aa).

It belongs to the imidazoleglycerol-phosphate dehydratase family.

Its subcellular location is the cytoplasm. It carries out the reaction D-erythro-1-(imidazol-4-yl)glycerol 3-phosphate = 3-(imidazol-4-yl)-2-oxopropyl phosphate + H2O. It functions in the pathway amino-acid biosynthesis; L-histidine biosynthesis; L-histidine from 5-phospho-alpha-D-ribose 1-diphosphate: step 6/9. The polypeptide is Imidazoleglycerol-phosphate dehydratase (Chlorobium limicola (strain DSM 245 / NBRC 103803 / 6330)).